We begin with the raw amino-acid sequence, 100 residues long: Urease subunit gamma (100 aa).

This sequence belongs to the urease gamma subunit family. As to quaternary structure, heterotrimer of UreA (gamma), UreB (beta) and UreC (alpha) subunits. Three heterotrimers associate to form the active enzyme.

The protein localises to the cytoplasm. It catalyses the reaction urea + 2 H2O + H(+) = hydrogencarbonate + 2 NH4(+). The protein operates within nitrogen metabolism; urea degradation; CO(2) and NH(3) from urea (urease route): step 1/1. In Burkholderia multivorans (strain ATCC 17616 / 249), this protein is Urease subunit gamma.